Consider the following 438-residue polypeptide: Hydrogenobyrinate a,c-diamide synthase (438 aa).

In terms of domain architecture, GATase cobBQ-type spans 247–438 (RIALAEDAAF…TFFHAIAKGG (192 aa)). The active-site Nucleophile is the C329.

This sequence belongs to the CobB/CbiA family. The cofactor is Mg(2+).

The catalysed reaction is hydrogenobyrinate + 2 L-glutamine + 2 ATP + 2 H2O = hydrogenobyrinate a,c-diamide + 2 L-glutamate + 2 ADP + 2 phosphate + 2 H(+). Its pathway is cofactor biosynthesis; adenosylcobalamin biosynthesis; cob(II)yrinate a,c-diamide from precorrin-2 (aerobic route): step 9/10. Its function is as follows. Catalyzes the ATP-dependent amidation of the two carboxylate groups at positions a and c of hydrogenobyrinate, using either L-glutamine or ammonia as the nitrogen source. This is Hydrogenobyrinate a,c-diamide synthase from Agrobacterium fabrum (strain C58 / ATCC 33970) (Agrobacterium tumefaciens (strain C58)).